A 195-amino-acid polypeptide reads, in one-letter code: MPTPTKGARLGGSPAHERLLLANLATALFEHGGITTTEAKARRLRPYAERLVTHAKRGDLHARRRVMRVVRNNSVVHTLFTEIGPRYADRPGGYTRIVKLGPRRGDAAPMARIELVEALTIAQTAVSEAERARGTRFAARKAPTGATAEAADDLKNESPTAAAVAAEAQAEQPTAEAVAADDAATTEAKDTKPES.

Positions 132 to 195 (ARGTRFAARK…TEAKDTKPES (64 aa)) are disordered. Low complexity predominate over residues 159–186 (PTAAAVAAEAQAEQPTAEAVAADDAATT).

This sequence belongs to the bacterial ribosomal protein bL17 family. In terms of assembly, part of the 50S ribosomal subunit. Contacts protein L32.

This is Large ribosomal subunit protein bL17 from Parafrankia sp. (strain EAN1pec).